Reading from the N-terminus, the 615-residue chain is 1-deoxy-D-xylulose-5-phosphate synthase (615 aa).

Residues His72 and 113 to 115 (GHA) contribute to the thiamine diphosphate site. Asp144 is a binding site for Mg(2+). Thiamine diphosphate contacts are provided by residues 145–146 (GA), Asn173, Tyr281, and Glu360. Asn173 provides a ligand contact to Mg(2+).

This sequence belongs to the transketolase family. DXPS subfamily. As to quaternary structure, homodimer. Mg(2+) is required as a cofactor. The cofactor is thiamine diphosphate.

The enzyme catalyses D-glyceraldehyde 3-phosphate + pyruvate + H(+) = 1-deoxy-D-xylulose 5-phosphate + CO2. The protein operates within metabolic intermediate biosynthesis; 1-deoxy-D-xylulose 5-phosphate biosynthesis; 1-deoxy-D-xylulose 5-phosphate from D-glyceraldehyde 3-phosphate and pyruvate: step 1/1. Functionally, catalyzes the acyloin condensation reaction between C atoms 2 and 3 of pyruvate and glyceraldehyde 3-phosphate to yield 1-deoxy-D-xylulose-5-phosphate (DXP). The sequence is that of 1-deoxy-D-xylulose-5-phosphate synthase from Thermus thermophilus (strain ATCC BAA-163 / DSM 7039 / HB27).